A 169-amino-acid polypeptide reads, in one-letter code: Putative esterase F42H10.6 (169 aa).

It belongs to the thioesterase paaI family.

The sequence is that of Putative esterase F42H10.6 from Caenorhabditis elegans.